The following is a 133-amino-acid chain: Ribosome-binding factor A (133 aa).

This sequence belongs to the RbfA family. As to quaternary structure, monomer. Binds 30S ribosomal subunits, but not 50S ribosomal subunits or 70S ribosomes.

Its subcellular location is the cytoplasm. Functionally, one of several proteins that assist in the late maturation steps of the functional core of the 30S ribosomal subunit. Associates with free 30S ribosomal subunits (but not with 30S subunits that are part of 70S ribosomes or polysomes). Required for efficient processing of 16S rRNA. May interact with the 5'-terminal helix region of 16S rRNA. The sequence is that of Ribosome-binding factor A from Pseudomonas fluorescens (strain ATCC BAA-477 / NRRL B-23932 / Pf-5).